The sequence spans 146 residues: Ribonuclease H (146 aa).

In terms of domain architecture, RNase H type-1 spans 1-141 (MKKVQLITDG…CDELATRAAR (141 aa)). Residues aspartate 9, glutamate 47, aspartate 69, and aspartate 133 each contribute to the Mg(2+) site.

It belongs to the RNase H family. Monomer. Mg(2+) is required as a cofactor.

It is found in the cytoplasm. It catalyses the reaction Endonucleolytic cleavage to 5'-phosphomonoester.. Endonuclease that specifically degrades the RNA of RNA-DNA hybrids. The sequence is that of Ribonuclease H from Solibacter usitatus (strain Ellin6076).